Reading from the N-terminus, the 577-residue chain is ATP-dependent zinc metalloprotease FtsH (577 aa).

Residues 1–3 lie on the Cytoplasmic side of the membrane; sequence MKK. Residues 4 to 24 form a helical membrane-spanning segment; that stretch reads LYWIILIAVVLACSGILMSLH. Topologically, residues 25 to 98 are extracellular; it reads LSVTKEEMTY…IKVDNSDSYS (74 aa). The chain crosses the membrane as a helical span at residues 99–119; that stretch reads ATKVIQIILIITVGTGVFLFI. The Cytoplasmic portion of the chain corresponds to 120–577; it reads RTSGGKDKPL…IDRICLKEAV (458 aa). 186–193 provides a ligand contact to ATP; sequence GPPGTGKT. H409 serves as a coordination point for Zn(2+). The active site involves E410. Positions 413 and 487 each coordinate Zn(2+).

In the central section; belongs to the AAA ATPase family. This sequence in the C-terminal section; belongs to the peptidase M41 family. As to quaternary structure, homohexamer. Zn(2+) serves as cofactor.

The protein resides in the cell membrane. Acts as a processive, ATP-dependent zinc metallopeptidase for both cytoplasmic and membrane proteins. Plays a role in the quality control of integral membrane proteins. The sequence is that of ATP-dependent zinc metalloprotease FtsH from Lachnoclostridium phytofermentans (strain ATCC 700394 / DSM 18823 / ISDg) (Clostridium phytofermentans).